A 176-amino-acid polypeptide reads, in one-letter code: Acireductone dioxygenase (176 aa).

4 residues coordinate Fe(2+): His-81, His-83, Glu-87, and His-126. Ni(2+) contacts are provided by His-81, His-83, Glu-87, and His-126.

The protein belongs to the acireductone dioxygenase (ARD) family. Fe(2+) serves as cofactor. Ni(2+) is required as a cofactor.

It is found in the cytoplasm. Its subcellular location is the nucleus. The enzyme catalyses 1,2-dihydroxy-5-(methylsulfanyl)pent-1-en-3-one + O2 = 4-methylsulfanyl-2-oxobutanoate + formate + 2 H(+). The catalysed reaction is 1,2-dihydroxy-5-(methylsulfanyl)pent-1-en-3-one + O2 = 3-(methylsulfanyl)propanoate + CO + formate + 2 H(+). Its pathway is amino-acid biosynthesis; L-methionine biosynthesis via salvage pathway; L-methionine from S-methyl-5-thio-alpha-D-ribose 1-phosphate: step 5/6. Catalyzes 2 different reactions between oxygen and the acireductone 1,2-dihydroxy-3-keto-5-methylthiopentene (DHK-MTPene) depending upon the metal bound in the active site. Fe-containing acireductone dioxygenase (Fe-ARD) produces formate and 2-keto-4-methylthiobutyrate (KMTB), the alpha-ketoacid precursor of methionine in the methionine recycle pathway. Ni-containing acireductone dioxygenase (Ni-ARD) produces methylthiopropionate, carbon monoxide and formate, and does not lie on the methionine recycle pathway. This Sclerotinia sclerotiorum (strain ATCC 18683 / 1980 / Ss-1) (White mold) protein is Acireductone dioxygenase (adi1).